Reading from the N-terminus, the 188-residue chain is MINSQDIKKGTCIRLDGKLYFCVDFLHVKPGKGNTIMRTTLKDVVKGGQIERRFNIGEKLEDVRVERRPYQFTYTEGEHYHFMNQETFDDVIIDKNLINGVDFMKEGEIVDVVSDASTDTVLFADMPTKVQLKVTYTEPGIKGDTATNTLKPATVETGAEVRVPLFINEGEVIEINTTDGSYVGRIRE.

Belongs to the elongation factor P family.

Its subcellular location is the cytoplasm. Its pathway is protein biosynthesis; polypeptide chain elongation. Its function is as follows. Involved in peptide bond synthesis. Stimulates efficient translation and peptide-bond synthesis on native or reconstituted 70S ribosomes in vitro. Probably functions indirectly by altering the affinity of the ribosome for aminoacyl-tRNA, thus increasing their reactivity as acceptors for peptidyl transferase. The protein is Elongation factor P of Parabacteroides distasonis (strain ATCC 8503 / DSM 20701 / CIP 104284 / JCM 5825 / NCTC 11152).